Consider the following 343-residue polypeptide: Holliday junction branch migration complex subunit RuvB (343 aa).

The large ATPase domain (RuvB-L) stretch occupies residues 4 to 184 (SDRLISAKAG…FGIVQRLEFY (181 aa)). Residues I23, R24, G65, K68, T69, T70, 131-133 (EDY), R174, Y184, and R221 contribute to the ATP site. T69 is a Mg(2+) binding site. The tract at residues 185 to 255 (NHQDLTHIIT…IADQALNMLK (71 aa)) is small ATPAse domain (RuvB-S). Residues 258-343 (SQGFDHMDRR…RSGREDDLFE (86 aa)) are head domain (RuvB-H). The DNA site is built by R294, R313, and R318.

The protein belongs to the RuvB family. Homohexamer. Forms an RuvA(8)-RuvB(12)-Holliday junction (HJ) complex. HJ DNA is sandwiched between 2 RuvA tetramers; dsDNA enters through RuvA and exits via RuvB. An RuvB hexamer assembles on each DNA strand where it exits the tetramer. Each RuvB hexamer is contacted by two RuvA subunits (via domain III) on 2 adjacent RuvB subunits; this complex drives branch migration. In the full resolvosome a probable DNA-RuvA(4)-RuvB(12)-RuvC(2) complex forms which resolves the HJ.

It localises to the cytoplasm. The enzyme catalyses ATP + H2O = ADP + phosphate + H(+). Its function is as follows. The RuvA-RuvB-RuvC complex processes Holliday junction (HJ) DNA during genetic recombination and DNA repair, while the RuvA-RuvB complex plays an important role in the rescue of blocked DNA replication forks via replication fork reversal (RFR). RuvA specifically binds to HJ cruciform DNA, conferring on it an open structure. The RuvB hexamer acts as an ATP-dependent pump, pulling dsDNA into and through the RuvAB complex. RuvB forms 2 homohexamers on either side of HJ DNA bound by 1 or 2 RuvA tetramers; 4 subunits per hexamer contact DNA at a time. Coordinated motions by a converter formed by DNA-disengaged RuvB subunits stimulates ATP hydrolysis and nucleotide exchange. Immobilization of the converter enables RuvB to convert the ATP-contained energy into a lever motion, pulling 2 nucleotides of DNA out of the RuvA tetramer per ATP hydrolyzed, thus driving DNA branch migration. The RuvB motors rotate together with the DNA substrate, which together with the progressing nucleotide cycle form the mechanistic basis for DNA recombination by continuous HJ branch migration. Branch migration allows RuvC to scan DNA until it finds its consensus sequence, where it cleaves and resolves cruciform DNA. In Marinobacter nauticus (strain ATCC 700491 / DSM 11845 / VT8) (Marinobacter aquaeolei), this protein is Holliday junction branch migration complex subunit RuvB.